Here is a 125-residue protein sequence, read N- to C-terminus: Protein ApaG (125 aa).

The ApaG domain maps to 1-125 (MINSPRVCIQ…FRLAVPTLIH (125 aa)).

This chain is Protein ApaG, found in Citrobacter koseri (strain ATCC BAA-895 / CDC 4225-83 / SGSC4696).